We begin with the raw amino-acid sequence, 1355 residues long: Probable aldehyde oxidase 2 (1355 aa).

The 2Fe-2S ferredoxin-type domain occupies 9-96 (RPVVVTVNGE…HCAVTTSEGI (88 aa)). Residues C48, C53, C56, and C78 each coordinate [2Fe-2S] cluster. Residues 244–422 (VAVTGDGWFH…VSISIPDWGS (179 aa)) form the FAD-binding PCMH-type domain. A disordered region spans residues 544–577 (PENANVPNGSCTNGTANGSANSSPEKHSNVDSSD). Polar residues predominate over residues 548–566 (NVPNGSCTNGTANGSANSS).

The protein belongs to the xanthine dehydrogenase family. In terms of assembly, aldehyde oxidases (AO) are homodimers and heterodimers of AO subunits. Requires [2Fe-2S] cluster as cofactor. FAD serves as cofactor. The cofactor is Mo-molybdopterin.

The catalysed reaction is an aldehyde + O2 + H2O = a carboxylate + H2O2 + H(+). The chain is Probable aldehyde oxidase 2 from Oryza sativa subsp. japonica (Rice).